The sequence spans 256 residues: Triosephosphate isomerase (256 aa).

Position 10–12 (10–12 (NWK)) interacts with substrate. His97 functions as the Electrophile in the catalytic mechanism. The active-site Proton acceptor is Glu169. Substrate contacts are provided by residues Gly175, Ser214, and 235–236 (GG).

It belongs to the triosephosphate isomerase family. Homodimer.

The protein localises to the cytoplasm. The catalysed reaction is D-glyceraldehyde 3-phosphate = dihydroxyacetone phosphate. The protein operates within carbohydrate biosynthesis; gluconeogenesis. Its pathway is carbohydrate degradation; glycolysis; D-glyceraldehyde 3-phosphate from glycerone phosphate: step 1/1. Functionally, involved in the gluconeogenesis. Catalyzes stereospecifically the conversion of dihydroxyacetone phosphate (DHAP) to D-glyceraldehyde-3-phosphate (G3P). The chain is Triosephosphate isomerase from Actinobacillus pleuropneumoniae serotype 7 (strain AP76).